The chain runs to 321 residues: Glucokinase (321 aa).

8-13 (GDVGGT) contributes to the ATP binding site.

Belongs to the bacterial glucokinase family.

Its subcellular location is the cytoplasm. It catalyses the reaction D-glucose + ATP = D-glucose 6-phosphate + ADP + H(+). In Salmonella arizonae (strain ATCC BAA-731 / CDC346-86 / RSK2980), this protein is Glucokinase.